The primary structure comprises 534 residues: uncharacterized protein (534 aa).

Disordered regions lie at residues 1–150 (MSDS…DIPP), 252–284 (RRFR…NGQP), and 383–434 (WKSQ…PSLP). Residues 8–67 (SQREDNYSRDRRSRFTEDSYSRRDSQRSGNEAPRESRYYRKEEHLQERSRSRSPARDSRW) show a composition bias toward basic and acidic residues. Residues 102 to 113 (SLQSTKATSSRT) are compositionally biased toward polar residues. Over residues 130–141 (PSAPAPPLPPSS) the composition is skewed to pro residues. Basic and acidic residues predominate over residues 252–262 (RRFRRREDNER). A compositionally biased stretch (low complexity) spans 263–272 (NNSNSPRNFS). Over residues 393–408 (NQGNRAYNPPNRNQAF) the composition is skewed to polar residues.

This is an uncharacterized protein from Schizosaccharomyces pombe (strain 972 / ATCC 24843) (Fission yeast).